We begin with the raw amino-acid sequence, 103 residues long: Large ribosomal subunit protein bL21 (103 aa).

It belongs to the bacterial ribosomal protein bL21 family. As to quaternary structure, part of the 50S ribosomal subunit. Contacts protein L20.

Its function is as follows. This protein binds to 23S rRNA in the presence of protein L20. This chain is Large ribosomal subunit protein bL21, found in Idiomarina loihiensis (strain ATCC BAA-735 / DSM 15497 / L2-TR).